The sequence spans 309 residues: Probable manganese-dependent inorganic pyrophosphatase (309 aa).

H9, D13, D15, D75, H97, and D149 together coordinate Mn(2+).

The protein belongs to the PPase class C family. Requires Mn(2+) as cofactor.

Its subcellular location is the cytoplasm. It carries out the reaction diphosphate + H2O = 2 phosphate + H(+). The chain is Probable manganese-dependent inorganic pyrophosphatase from Exiguobacterium sp. (strain ATCC BAA-1283 / AT1b).